The primary structure comprises 568 residues: Urease subunit alpha (568 aa).

In terms of domain architecture, Urease spans 130-568 (GGIDTHIHFI…LPMAQRYFLF (439 aa)). Ni(2+) contacts are provided by H135, H137, and K218. The residue at position 218 (K218) is an N6-carboxylysine. Position 220 (H220) interacts with substrate. 2 residues coordinate Ni(2+): H247 and H273. Catalysis depends on H321, which acts as the Proton donor. Ni(2+) is bound at residue D361.

It belongs to the metallo-dependent hydrolases superfamily. Urease alpha subunit family. Heterotrimer of UreA (gamma), UreB (beta) and UreC (alpha) subunits. Three heterotrimers associate to form the active enzyme. Requires Ni cation as cofactor. In terms of processing, carboxylation allows a single lysine to coordinate two nickel ions.

The protein resides in the cytoplasm. The enzyme catalyses urea + 2 H2O + H(+) = hydrogencarbonate + 2 NH4(+). The protein operates within nitrogen metabolism; urea degradation; CO(2) and NH(3) from urea (urease route): step 1/1. The protein is Urease subunit alpha of Burkholderia pseudomallei (strain 1106a).